A 207-amino-acid polypeptide reads, in one-letter code: Nucleoplasmin-2 (207 aa).

Over residues 1–15 the composition is skewed to polar residues; that stretch reads MSRHSTSSVTETTAK. 2 disordered regions span residues 1–20 and 121–207; these read MSRH…MLWG and DLTW…VTKK. The segment covering 123–147 has biased composition (acidic residues); it reads TWEDDEEEEEEEEEEDEDEDADISL. An acidic tract A2 region spans residues 129 to 152; that stretch reads EEEEEEEEEDEDEDADISLEEIPV. The short motif at 165-180 is the Bipartite nuclear localization signal element; sequence SIAKKKKVEKEEDETV. Positions 198 to 207 are enriched in basic residues; it reads PRAKKPVTKK.

Belongs to the nucleoplasmin family. In terms of assembly, homopentamer, when bound to H2A-H2B dimers only. Homodecamer of two stacked pentamers, when bound to H2A-H2B dimers and H3-H4 tetramers simultaneously. In terms of tissue distribution, ovary specific.

It localises to the nucleus. Functionally, core histones chaperone involved in chromatin reprogramming, specially during fertilization and early embryonic development. Probably involved in sperm DNA decondensation during fertilization. The protein is Nucleoplasmin-2 (Npm2) of Mus musculus (Mouse).